The chain runs to 294 residues: ATP synthase gamma chain (294 aa).

This sequence belongs to the ATPase gamma chain family. In terms of assembly, F-type ATPases have 2 components, CF(1) - the catalytic core - and CF(0) - the membrane proton channel. CF(1) has five subunits: alpha(3), beta(3), gamma(1), delta(1), epsilon(1). CF(0) has three main subunits: a, b and c.

The protein localises to the cell inner membrane. Produces ATP from ADP in the presence of a proton gradient across the membrane. The gamma chain is believed to be important in regulating ATPase activity and the flow of protons through the CF(0) complex. This Campylobacter jejuni subsp. jejuni serotype O:6 (strain 81116 / NCTC 11828) protein is ATP synthase gamma chain.